The sequence spans 330 residues: Putative protein N-methyltransferase FAM86B1 (330 aa).

Residues Trp139, 165–167, Trp228, and Ala247 each bind S-adenosyl-L-methionine; that span reads GSG.

This sequence belongs to the class I-like SAM-binding methyltransferase superfamily. EEF2KMT family.

The sequence is that of Putative protein N-methyltransferase FAM86B1 from Homo sapiens (Human).